A 247-amino-acid polypeptide reads, in one-letter code: Probable transcriptional regulatory protein ECA2494 (247 aa).

It belongs to the TACO1 family.

It is found in the cytoplasm. In Pectobacterium atrosepticum (strain SCRI 1043 / ATCC BAA-672) (Erwinia carotovora subsp. atroseptica), this protein is Probable transcriptional regulatory protein ECA2494.